Consider the following 194-residue polypeptide: Large ribosomal subunit protein uL24c (194 aa).

The N-terminal 50 residues, 1-50 (MVAMAMASLQSSMSSLSLSSNSFLGQPLSPITLSPFLQGKPTEKKCLIVM), are a transit peptide targeting the chloroplast.

It belongs to the universal ribosomal protein uL24 family. As to quaternary structure, part of the 50S ribosomal subunit.

It localises to the plastid. Its subcellular location is the chloroplast. One of two assembly initiator proteins, it binds directly to the 5'-end of the 23S rRNA, where it nucleates assembly of the 50S subunit. In Pisum sativum (Garden pea), this protein is Large ribosomal subunit protein uL24c (RPL24).